Consider the following 153-residue polypeptide: Putative phosphatidylglycerol/phosphatidylinositol transfer protein DDB_G0285639 (153 aa).

Positions 1 to 21 are cleaved as a signal peptide; sequence MIIKILLLIISISLFLNISIG. N-linked (GlcNAc...) asparagine glycans are attached at residues Asn-17, Asn-61, Asn-87, Asn-117, and Asn-140.

It belongs to the NPC2 family. Monomer.

Functionally, catalyzes the intermembrane transfer of phosphatidylglycerol and phosphatidylinositol. The chain is Putative phosphatidylglycerol/phosphatidylinositol transfer protein DDB_G0285639 from Dictyostelium discoideum (Social amoeba).